The sequence spans 1439 residues: Fanconi anemia group D2 protein (1439 aa).

Residue K563 forms a Glycyl lysine isopeptide (Lys-Gly) (interchain with G-Cter in ubiquitin) linkage.

The protein belongs to the Fanconi anemia protein FANCD2 family. As to quaternary structure, homodimer; cannot be ubiquitinated and does not bind DNA. Part of a FANCI-FANCD2 heterodimeric complex that binds and scans dsDNA for DNA damage. Interacts directly with FANCE and FANCI. Interacts with USP1 and MEN1. The ubiquitinated form specifically interacts with BRCA1 and BLM. Both the nonubiquitinated and the monoubiquitinated forms interact with BRCA2; this interaction is mediated by phosphorylated FANCG and the complex also includes XCCR3. The ubiquitinated form specifically interacts with MTMR15/FAN1 (via UBZ-type zinc finger), leading to recruit MTMR15/FAN1 to sites of DNA damage. Interacts with DCLRE1B/Apollo. Interacts with POLN. Interacts with UHRF1 and UHRF2; these interactions promote FANCD2 activation. Monoubiquitinated on Lys-563 during S phase and upon genotoxic stress. Deubiquitinated by USP1 as cells enter G2/M, or once DNA repair is completed. Monoubiquitination prevents DNA release from the FANCI-FANCD2 complex. FANCD2 is only ubiquitinated in the FANCI-FANCD2 complex and the monoubiquitination of FANCD2 is promoted by phosphorylation of FANCI. Post-translationally, phosphorylated in response to various genotoxic stresses by ATM and/or ATR.

The protein localises to the nucleus. Its function is as follows. Required for maintenance of chromosomal stability. Promotes accurate and efficient pairing of homologs during meiosis. Involved in the repair of DNA double-strand breaks, both by homologous recombination and single-strand annealing. The FANCI-FANCD2 complex binds and scans double-stranded DNA (dsDNA) for DNA damage; this complex stalls at DNA junctions between double-stranded DNA and single-stranded DNA. May participate in S phase and G2 phase checkpoint activation upon DNA damage. Plays a role in preventing breakage and loss of missegregating chromatin at the end of cell division, particularly after replication stress. Required for the targeting, or stabilization, of BLM to non-centromeric abnormal structures induced by replicative stress. Promotes BRCA2/FANCD1 loading onto damaged chromatin. May also be involved in B-cell immunoglobulin isotype switching. The polypeptide is Fanconi anemia group D2 protein (Gallus gallus (Chicken)).